Here is a 380-residue protein sequence, read N- to C-terminus: Chorismate synthase (380 aa).

2 residues coordinate NADP(+): arginine 40 and arginine 46. Residues 128–130 (RSS), 247–248 (QA), glycine 292, 307–311 (KPIPT), and arginine 333 contribute to the FMN site.

The protein belongs to the chorismate synthase family. As to quaternary structure, homotetramer. FMNH2 is required as a cofactor.

It catalyses the reaction 5-O-(1-carboxyvinyl)-3-phosphoshikimate = chorismate + phosphate. It participates in metabolic intermediate biosynthesis; chorismate biosynthesis; chorismate from D-erythrose 4-phosphate and phosphoenolpyruvate: step 7/7. Its function is as follows. Catalyzes the anti-1,4-elimination of the C-3 phosphate and the C-6 proR hydrogen from 5-enolpyruvylshikimate-3-phosphate (EPSP) to yield chorismate, which is the branch point compound that serves as the starting substrate for the three terminal pathways of aromatic amino acid biosynthesis. This reaction introduces a second double bond into the aromatic ring system. The sequence is that of Chorismate synthase from Alkaliphilus metalliredigens (strain QYMF).